The sequence spans 116 residues: Large ribosomal subunit protein uL18 (116 aa).

It belongs to the universal ribosomal protein uL18 family. As to quaternary structure, part of the 50S ribosomal subunit; part of the 5S rRNA/L5/L18/L25 subcomplex. Contacts the 5S and 23S rRNAs.

Its function is as follows. This is one of the proteins that bind and probably mediate the attachment of the 5S RNA into the large ribosomal subunit, where it forms part of the central protuberance. This Shewanella woodyi (strain ATCC 51908 / MS32) protein is Large ribosomal subunit protein uL18.